Reading from the N-terminus, the 479-residue chain is Integrator complex subunit 12 (479 aa).

Residues 57–140 form a disordered region; sequence SKVSLPKMTK…SPIAFQTKDI (84 aa). The span at 70–90 shows a compositional bias: low complexity; that stretch reads KSSSSSSASSSITTTSSSKSS. Residues 91–128 show a composition bias toward basic and acidic residues; it reads TSEKSKKESEKRTLEKIRVDPGEGVEPPKKPRLEKQDS. Residues 161-217 form a PHD-type zinc finger; the sequence is GLACVVCRQMTVTSGNQLVECQECHNLYHQECHKPQVTDKDVNDPRLVWYCARCTRQ. Disordered stretches follow at residues 221–241, 274–293, and 305–479; these read MAQKTQKPPQKPAPALATTVP, TAASGNSSSSSSSSSSLPPG, and SNVG…KLKK. Composition is skewed to low complexity over residues 223 to 239 and 280 to 289; these read QKTQKPPQKPAPALATT and SSSSSSSSSS. Positions 305-328 are enriched in polar residues; the sequence is SNVGPSSTKLSTSQSGNSKTSPAA. The span at 354–364 shows a compositional bias: gly residues; it reads SSAGSGNGNNG. Residues 399 to 411 show a composition bias toward low complexity; that stretch reads GSLSPGAAPSSSL. Over residues 412–428 the composition is skewed to gly residues; the sequence is GGNGGSGGNGAGNGGNS. Residues 429–451 show a composition bias toward low complexity; sequence AGSSSSSGNNNNNGAKASADGKA. Residues 466 to 479 are compositionally biased toward basic residues; sequence QMVKKKAAQKKLKK.

It belongs to the Integrator subunit 12 family. In terms of assembly, component of the Integrator complex, composed of core subunits INTS1, INTS2, INTS3, INTS4, INTS5, INTS6, INTS7, INTS8, INTS9/RC74, INTS10, INTS11/CPSF3L, INTS12, INTS13, INTS14 and INTS15. The core complex associates with protein phosphatase 2A subunits PPP2CA and PPP2R1A, to form the Integrator-PP2A (INTAC) complex.

Its subcellular location is the nucleus. Its function is as follows. Component of the integrator complex, a multiprotein complex that terminates RNA polymerase II (Pol II) transcription in the promoter-proximal region of genes. The integrator complex provides a quality checkpoint during transcription elongation by driving premature transcription termination of transcripts that are unfavorably configured for transcriptional elongation: the complex terminates transcription by (1) catalyzing dephosphorylation of the C-terminal domain (CTD) of Pol II subunit POLR2A/RPB1 and SUPT5H/SPT5, (2) degrading the exiting nascent RNA transcript via endonuclease activity and (3) promoting the release of Pol II from bound DNA. The integrator complex is also involved in terminating the synthesis of non-coding Pol II transcripts, such as enhancer RNAs (eRNAs), small nuclear RNAs (snRNAs), telomerase RNAs and long non-coding RNAs (lncRNAs). The chain is Integrator complex subunit 12 (ints12) from Danio rerio (Zebrafish).